The chain runs to 141 residues: Nucleoside diphosphate kinase (141 aa).

Positions 11, 59, 87, 93, 104, and 114 each coordinate ATP. His117 functions as the Pros-phosphohistidine intermediate in the catalytic mechanism.

This sequence belongs to the NDK family. In terms of assembly, homotetramer. Mg(2+) is required as a cofactor.

The protein resides in the cytoplasm. The enzyme catalyses a 2'-deoxyribonucleoside 5'-diphosphate + ATP = a 2'-deoxyribonucleoside 5'-triphosphate + ADP. The catalysed reaction is a ribonucleoside 5'-diphosphate + ATP = a ribonucleoside 5'-triphosphate + ADP. Major role in the synthesis of nucleoside triphosphates other than ATP. The ATP gamma phosphate is transferred to the NDP beta phosphate via a ping-pong mechanism, using a phosphorylated active-site intermediate. This is Nucleoside diphosphate kinase from Bordetella petrii (strain ATCC BAA-461 / DSM 12804 / CCUG 43448).